The chain runs to 409 residues: Probable tRNA N6-adenosine threonylcarbamoyltransferase, mitochondrial (409 aa).

Residues 1-31 (MHALRNFAGNGIANVFGCGIRRRLSYVLGIE) constitute a mitochondrion transit peptide. Residues His135 and His139 each contribute to the a divalent metal cation site. Residues 159–163 (LASGG), Asp192, Gly212, Glu216, 322–323 (NN), and Ser350 each bind substrate. Asp351 is a binding site for a divalent metal cation.

The protein belongs to the KAE1 / TsaD family. As to quaternary structure, homodimer. It depends on a divalent metal cation as a cofactor.

The protein localises to the mitochondrion. The catalysed reaction is L-threonylcarbamoyladenylate + adenosine(37) in tRNA = N(6)-L-threonylcarbamoyladenosine(37) in tRNA + AMP + H(+). Its function is as follows. Required for the formation of a threonylcarbamoyl group on adenosine at position 37 (t(6)A37) in mitochondrial tRNAs that read codons beginning with adenine. Probably involved in the transfer of the threonylcarbamoyl moiety of threonylcarbamoyl-AMP (TC-AMP) to the N6 group of A37. Involved in mitochondrial genome maintenance. The polypeptide is Probable tRNA N6-adenosine threonylcarbamoyltransferase, mitochondrial (Drosophila melanogaster (Fruit fly)).